The following is a 696-amino-acid chain: MVQRYQSPVRVYKYPFELVMAAYEKRFPTCPQIPVFLGSEVLRESRSPDGAVHVVERSCRLRVDAPRLLRKIAGVEHVVFVQTNILNWKERTLLIEAHNETFANRVVVNEHCSYTVHPENEDWTCFEQSASLDIRSFFGFENALEKIAMKQYTANVKRGKEVIEHYLNELISQGTSHIPRWTPAPVREEDARNQAGPRDPSSLEAHGPRSTLGPALEAVSMDGDKLDADYIERCLGHLTPMQESCLIQLRHWLQETHKGKIPKDEHILRFLRAHDFHLDKAREMLRQSLSWRKQHQVDLLLQTWQPPALLEEFYAGGWHYQDIDGRPLYILRLGQMDTKGLMKAVGEEALLRHVLSVNEEGQKRCEGSTRQLGRPISSWTCLLDLEGLNMRHLWRPGVKALLRMIEVVEDNYPETLGRLLIVRAPRVFPVLWTLISPFINENTRRKFLIYSGSNYQGPGGLVDYLDREVIPDFLGGESVCNVPEGGLVPKSLYMTEEEQEHTDQLWQWSETYHSASVLRGAPHEVAVEILEGESVITWDFDILRGDVVFSLYHTKQAPRLGAREPGTRASGQLIDKGWVLGRDYSRVEAPLVCREGESIQGSHVTRWPGVYLLQWQMHSPPSSVACSLPGVDDVLTALHSPGPKCKLLYYCEVLASEDFRGSMSSLESCTSGFSQLSAATSSSSSGQSHSSSLVSR.

A PRELI/MSF1 domain is found at 2 to 175; that stretch reads VQRYQSPVRV…YLNELISQGT (174 aa). Residues 178–214 form a disordered region; the sequence is IPRWTPAPVREEDARNQAGPRDPSSLEAHGPRSTLGP. One can recognise a CRAL-TRIO domain in the interval 306 to 482; that stretch reads PPALLEEFYA…FLGGESVCNV (177 aa). The region spanning 509 to 653 is the GOLD domain; sequence SETYHSASVL…KCKLLYYCEV (145 aa).

The chain is SEC14-like protein 5 (SEC14L5) from Homo sapiens (Human).